Reading from the N-terminus, the 122-residue chain is Large ribosomal subunit protein bL12 (122 aa).

This sequence belongs to the bacterial ribosomal protein bL12 family. Homodimer. Part of the ribosomal stalk of the 50S ribosomal subunit. Forms a multimeric L10(L12)X complex, where L10 forms an elongated spine to which 2 to 4 L12 dimers bind in a sequential fashion. Binds GTP-bound translation factors.

Functionally, forms part of the ribosomal stalk which helps the ribosome interact with GTP-bound translation factors. Is thus essential for accurate translation. The protein is Large ribosomal subunit protein bL12 of Azotobacter vinelandii (strain DJ / ATCC BAA-1303).